The following is a 123-amino-acid chain: Large ribosomal subunit protein bL17 (123 aa).

Belongs to the bacterial ribosomal protein bL17 family. As to quaternary structure, part of the 50S ribosomal subunit. Contacts protein L32.

In Dichelobacter nodosus (strain VCS1703A), this protein is Large ribosomal subunit protein bL17.